The chain runs to 332 residues: MQLETQDALYVALELVIAALAVAGNVLVCAAVGASSALQTPTNYFLVSLATADVAVGLFAIPFAITISLGFCTDFHGCLFLACFVLVLTQSSIFSLLAVAVDRYLAIRVPLRYKGLVTGTRARGIIAVLWVLAFGIGLTPFLGWNSKDSATSNCTELGDGIANKSCCPVTCLFENVVPMSYMVYFNFFGCVLPPLLIMLVIYIKIFMVACKQLQRMELMDHSRTTLQREIHAAKSLAMIVGIFALCWLPVHAINCITLFHPALAKDKPKWVMNVAILLSHANSVVNPIVYAYRNRDFRYSFHKIISRYVLCQAETKGGSGQAGAQSTLSLGL.

The Extracellular portion of the chain corresponds to M1–A8. Residues L9–G33 form a helical membrane-spanning segment. At A34 to N43 the chain is on the cytoplasmic side. Residues Y44–I67 form a helical membrane-spanning segment. Over S68–C78 the chain is Extracellular. An intrachain disulfide couples C78 to C171. Residues L79–V101 traverse the membrane as a helical segment. The Cytoplasmic segment spans residues D102–R121. A helical transmembrane segment spans residues A122–W144. At N145–P178 the chain is on the extracellular side. N-linked (GlcNAc...) asparagine glycans are attached at residues N153 and N163. E174 lines the adenosine pocket. The chain crosses the membrane as a helical span at residues M179–I203. Topologically, residues K204 to S235 are cytoplasmic. Residues L236–F259 form a helical membrane-spanning segment. Residue N254 coordinates adenosine. Residues H260–K267 lie on the Extracellular side of the membrane. A helical membrane pass occupies residues P268 to A291. Residues S279 and H280 each contribute to the adenosine site. Residues Y292–L332 are Cytoplasmic-facing. C311 carries the S-palmitoyl cysteine lipid modification.

It belongs to the G-protein coupled receptor 1 family.

Its subcellular location is the cell membrane. Functionally, receptor for adenosine. The activity of this receptor is mediated by G proteins which activate adenylyl cyclase. The sequence is that of Adenosine receptor A2b (Adora2b) from Mus musculus (Mouse).